The sequence spans 273 residues: (5R)-carbapenem-3-carboxylate synthase (273 aa).

The Fe cation site is built by His101 and Asp103. Position 104 (Gly104) interacts with substrate. Thr130 is a binding site for 2-oxoglutarate. His251 lines the Fe cation pocket. 3 residues coordinate 2-oxoglutarate: Arg253, Arg263, and Arg267.

It belongs to the TfdA dioxygenase family. As to quaternary structure, homohexamer. Dimer of trimers. Fe(2+) serves as cofactor.

The protein localises to the cytoplasm. The catalysed reaction is (3S,5S)-carbapenam-3-caboxylate + 2-oxoglutarate + O2 = (5R)-carbapenem-3-carboxylate + succinate + CO2 + H2O. Its activity is regulated as follows. Inhibited by L-N-acetylproline and by D-N-acetylproline. Functionally, catalyzes the Fe(2+) and alpha-ketoglutarate-dependent conversion of (3S,5S)-carbapenam to (5R)-carbapenem, an essential step in carbapenem antibiotic biosynthesis. This chain is (5R)-carbapenem-3-carboxylate synthase (carC), found in Pectobacterium carotovorum subsp. carotovorum (Erwinia carotovora subsp. carotovora).